The sequence spans 155 residues: DNA gyrase inhibitor (155 aa).

The protein belongs to the DNA gyrase inhibitor family. As to quaternary structure, interacts with DNA gyrase.

The protein resides in the cytoplasm. In terms of biological role, inhibits the supercoiling activity of DNA gyrase. Acts by inhibiting DNA gyrase at an early step, prior to (or at the step of) binding of DNA by the gyrase. It protects cells against toxins that target DNA gyrase, by inhibiting activity of these toxins and reducing the formation of lethal double-strand breaks in the cell. This is DNA gyrase inhibitor from Citrobacter koseri (strain ATCC BAA-895 / CDC 4225-83 / SGSC4696).